Here is a 341-residue protein sequence, read N- to C-terminus: tRNA N6-adenosine threonylcarbamoyltransferase (341 aa).

2 residues coordinate Fe cation: His111 and His115. Substrate-binding positions include 134–138, Asp167, Gly180, and Asn276; that span reads LVSGG. Residue Asp304 coordinates Fe cation.

The protein belongs to the KAE1 / TsaD family. Fe(2+) serves as cofactor.

The protein localises to the cytoplasm. The enzyme catalyses L-threonylcarbamoyladenylate + adenosine(37) in tRNA = N(6)-L-threonylcarbamoyladenosine(37) in tRNA + AMP + H(+). Functionally, required for the formation of a threonylcarbamoyl group on adenosine at position 37 (t(6)A37) in tRNAs that read codons beginning with adenine. Is involved in the transfer of the threonylcarbamoyl moiety of threonylcarbamoyl-AMP (TC-AMP) to the N6 group of A37, together with TsaE and TsaB. TsaD likely plays a direct catalytic role in this reaction. In Alteromonas mediterranea (strain DSM 17117 / CIP 110805 / LMG 28347 / Deep ecotype), this protein is tRNA N6-adenosine threonylcarbamoyltransferase.